The primary structure comprises 205 residues: Large ribosomal subunit protein bL25A (205 aa).

This sequence belongs to the bacterial ribosomal protein bL25 family. CTC subfamily. As to quaternary structure, part of the 50S ribosomal subunit; part of the 5S rRNA/L5/L18/L25 subcomplex. Contacts the 5S rRNA. Binds to the 5S rRNA independently of L5 and L18.

Functionally, this is one of the proteins that binds to the 5S RNA in the ribosome where it forms part of the central protuberance. This is Large ribosomal subunit protein bL25A from Symbiobacterium thermophilum (strain DSM 24528 / JCM 14929 / IAM 14863 / T).